The following is a 293-amino-acid chain: D-psicose 3-epimerase (293 aa).

Substrate contacts are provided by tyrosine 6 and alanine 107. The Proton donor/acceptor role is filled by glutamate 150. A Mn(2+)-binding site is contributed by glutamate 150. Residues glutamate 156 and aspartate 183 to histidine 186 each bind substrate. Residues aspartate 183 and histidine 209 each contribute to the Mn(2+) site. Residue arginine 215 coordinates substrate. Residue glutamate 244 is the Proton donor/acceptor of the active site. Glutamate 244 is a Mn(2+) binding site.

Belongs to the hyi family. Homotetramer. It depends on Mn(2+) as a cofactor. The cofactor is Co(2+).

It carries out the reaction D-allulose = keto-D-fructose. In terms of biological role, involved in the biosynthesis of D-psicose. Catalyzes the reversible epimerization of D-fructose at the C3 position to yield D-psicose. The enzyme is highly specific for D-psicose and shows very low activity with D-tagatose. This Ruminiclostridium cellulolyticum (strain ATCC 35319 / DSM 5812 / JCM 6584 / H10) (Clostridium cellulolyticum) protein is D-psicose 3-epimerase.